A 214-amino-acid chain; its full sequence is Adenylate kinase (214 aa).

10–15 serves as a coordination point for ATP; it reads GGGKGT. Residues 30–59 form an NMP region; sequence STGDMFRENVKGGTELGLKAKEYMDAGQLV. AMP-binding positions include threonine 31, arginine 36, 57–59, 85–88, and glutamine 92; these read QLV and GFPR. The interval 126-163 is LID; it reads GRRVCRVCGATFHVLFNAPKEDGKCDKCGGELYQRSDD. Arginine 127 contacts ATP. Zn(2+) contacts are provided by cysteine 130 and cysteine 133. 136–137 provides a ligand contact to ATP; it reads TF. 2 residues coordinate Zn(2+): cysteine 150 and cysteine 153. The AMP site is built by arginine 160 and arginine 171. Glutamine 199 is an ATP binding site.

It belongs to the adenylate kinase family. In terms of assembly, monomer.

It is found in the cytoplasm. The catalysed reaction is AMP + ATP = 2 ADP. The protein operates within purine metabolism; AMP biosynthesis via salvage pathway; AMP from ADP: step 1/1. Its function is as follows. Catalyzes the reversible transfer of the terminal phosphate group between ATP and AMP. Plays an important role in cellular energy homeostasis and in adenine nucleotide metabolism. This Desulforudis audaxviator (strain MP104C) protein is Adenylate kinase.